The following is a 587-amino-acid chain: Protein IQ-DOMAIN 31 (587 aa).

The segment at 57 to 80 is disordered; the sequence is ETNTVDRSGGMLETQNVGPEEISD. Residue serine 79 is modified to Phosphoserine. IQ domains follow at residues 112-140, 141-163, and 164-188; these read REIA…GIIR, LQAL…SVMG, and IVRL…VYRK. Positions 149–159 are calmodulin-binding; it reads LVRRQAVATLF. The short motif at 176–183 is the Nuclear localization signal element; the sequence is IRKSDIGV. Positions 344 to 587 are disordered; it reads NPVVESSIQP…AKTTPAERKR (244 aa). 2 stretches are compositionally biased toward basic and acidic residues: residues 357-373 and 390-413; these read PRKE…KTRE and CDEK…EMEV. Over residues 424-434 the composition is skewed to polar residues; sequence ALDSSLVNQID. Composition is skewed to basic and acidic residues over residues 435–472 and 482–494; these read SNEK…ENQK and KTER…HHET. 2 stretches are compositionally biased toward polar residues: residues 495-506 and 544-561; these read SPSIPSYMQATK and RITS…SGDK.

It belongs to the IQD family. As to quaternary structure, binds to multiple calmodulin (CaM) in the presence of Ca(2+) and CaM-like proteins.

The protein localises to the nucleus. The protein resides in the nucleus envelope. Its subcellular location is the cytoplasm. It is found in the cytoskeleton. It localises to the cell membrane. In terms of biological role, may be involved in cooperative interactions with calmodulins or calmodulin-like proteins. Recruits calmodulin proteins to microtubules, thus being a potential scaffold in cellular signaling and trafficking. May associate with nucleic acids and regulate gene expression at the transcriptional or post-transcriptional level. In Arabidopsis thaliana (Mouse-ear cress), this protein is Protein IQ-DOMAIN 31.